The following is a 493-amino-acid chain: MTIATPLKAQPKASHFIDGDYVEDNTGTPFESIFPATGEMIAKLHAATPAIVERAIASAKRAQKEWAAMSPMARGRILKRAADIMRERNDALSTLETLDTGKPIQETIVADPTSGADAFEFFGGIAPSALNGDYIPLGGDFAYTKRVPLGVCVGIGAWNYPQQIACWKAAPALVAGNAMVFKPSENTPLGALKIAEILIEAGLPKGLFNVIQGDRDTGPLLVNHPDVAKVSLTGSVPTGRKVAAAAAGHLKHVTMELGGKSPMIVFDDADIESAVGGAMLGNFYSSGQVCSNGTRVFVQKKAKARFLENLKRRTEAMILGDPLDYATHLGPLVSKAQQEKVLSYIEKGKAEGATLITGGGIPNNVAGEGAYVQPTVFADVTDDMTIAREEIFGPVMCVLDFDDEDEVLARANATEFGLAGGVFTADLARAHRVVDGLEAGTLWINTYNLCPVEIPFGGSKQSGFGRENSAAALEHYSELKTVYVSTGKVDAPY.

Positions 32, 33, and 99 each coordinate K(+). Residue 156–158 (GAW) coordinates NAD(+). K168 functions as the Charge relay system in the catalytic mechanism. NAD(+)-binding positions include 182–185 (KPSE) and 235–238 (SVPT). L250 contributes to the K(+) binding site. E256 serves as the catalytic Proton acceptor. NAD(+)-binding residues include G258, C290, and E390. The active-site Nucleophile is C290. At C290 the chain carries Cysteine sulfenic acid (-SOH). Residues K460 and G463 each coordinate K(+). E467 acts as the Charge relay system in catalysis.

The protein belongs to the aldehyde dehydrogenase family. Dimer of dimers. K(+) serves as cofactor.

The catalysed reaction is betaine aldehyde + NAD(+) + H2O = glycine betaine + NADH + 2 H(+). The protein operates within amine and polyamine biosynthesis; betaine biosynthesis via choline pathway; betaine from betaine aldehyde: step 1/1. In terms of biological role, involved in the biosynthesis of the osmoprotectant glycine betaine. Catalyzes the irreversible oxidation of betaine aldehyde to the corresponding acid. This Agrobacterium fabrum (strain C58 / ATCC 33970) (Agrobacterium tumefaciens (strain C58)) protein is Betaine aldehyde dehydrogenase.